We begin with the raw amino-acid sequence, 622 residues long: DNA mismatch repair protein MutL (622 aa).

The interval 376 to 401 is disordered; the sequence is REVREGSSTGRAGNYQPPEPPSREAM.

Belongs to the DNA mismatch repair MutL/HexB family.

Its function is as follows. This protein is involved in the repair of mismatches in DNA. It is required for dam-dependent methyl-directed DNA mismatch repair. May act as a 'molecular matchmaker', a protein that promotes the formation of a stable complex between two or more DNA-binding proteins in an ATP-dependent manner without itself being part of a final effector complex. This chain is DNA mismatch repair protein MutL, found in Aeromonas hydrophila subsp. hydrophila (strain ATCC 7966 / DSM 30187 / BCRC 13018 / CCUG 14551 / JCM 1027 / KCTC 2358 / NCIMB 9240 / NCTC 8049).